Here is a 98-residue protein sequence, read N- to C-terminus: NADH-ubiquinone oxidoreductase chain 4L (98 aa).

The next 3 helical transmembrane spans lie at 2–22 (PSIS…MLVF), 29–49 (SLLC…LFIM), and 61–81 (ILLL…LVMV).

The protein belongs to the complex I subunit 4L family. As to quaternary structure, core subunit of respiratory chain NADH dehydrogenase (Complex I) which is composed of 45 different subunits.

The protein localises to the mitochondrion inner membrane. It carries out the reaction a ubiquinone + NADH + 5 H(+)(in) = a ubiquinol + NAD(+) + 4 H(+)(out). In terms of biological role, core subunit of the mitochondrial membrane respiratory chain NADH dehydrogenase (Complex I) which catalyzes electron transfer from NADH through the respiratory chain, using ubiquinone as an electron acceptor. Part of the enzyme membrane arm which is embedded in the lipid bilayer and involved in proton translocation. In Lepilemur mitsinjoensis (Mitsinjo sportive lemur), this protein is NADH-ubiquinone oxidoreductase chain 4L (MT-ND4L).